Here is a 351-residue protein sequence, read N- to C-terminus: Nicotinate-nucleotide--dimethylbenzimidazole phosphoribosyltransferase (351 aa).

The Proton acceptor role is filled by Glu-317.

This sequence belongs to the CobT family.

It carries out the reaction 5,6-dimethylbenzimidazole + nicotinate beta-D-ribonucleotide = alpha-ribazole 5'-phosphate + nicotinate + H(+). It functions in the pathway nucleoside biosynthesis; alpha-ribazole biosynthesis; alpha-ribazole from 5,6-dimethylbenzimidazole: step 1/2. Functionally, catalyzes the synthesis of alpha-ribazole-5'-phosphate from nicotinate mononucleotide (NAMN) and 5,6-dimethylbenzimidazole (DMB). This chain is Nicotinate-nucleotide--dimethylbenzimidazole phosphoribosyltransferase, found in Pseudomonas aeruginosa (strain ATCC 15692 / DSM 22644 / CIP 104116 / JCM 14847 / LMG 12228 / 1C / PRS 101 / PAO1).